The following is a 433-amino-acid chain: Probable M18 family aminopeptidase 2 (433 aa).

H84, H161, and H409 together coordinate Zn(2+).

This sequence belongs to the peptidase M18 family. Requires Zn(2+) as cofactor.

The protein is Probable M18 family aminopeptidase 2 (apeB) of Clostridium acetobutylicum (strain ATCC 824 / DSM 792 / JCM 1419 / IAM 19013 / LMG 5710 / NBRC 13948 / NRRL B-527 / VKM B-1787 / 2291 / W).